Here is a 1744-residue protein sequence, read N- to C-terminus: Myotubularin-related protein 5 (1744 aa).

The region spanning 14-150 (DTVAVIVLEE…IRFLTYELVE (137 aa)) is the uDENN domain. Positions 165 to 304 (ELGFELIPIS…YYNSLHQRLR (140 aa)) constitute a cDENN domain. One can recognise a dDENN domain in the interval 306–412 (VMFTTTSQED…LTRALPRRKH (107 aa)). A GRAM domain is found at 787 to 871 (KGNFDPVLAH…LYSMESFKKL (85 aa)). The 452-residue stretch at 996–1447 (NAHIRYAVID…PQIHMWPFLA (452 aa)) folds into the Myotubularin phosphatase domain. Polar residues predominate over residues 1102–1116 (TGSMTGSQQTLHSKA). The segment at 1102-1123 (TGSMTGSQQTLHSKASSNEESS) is disordered. The Phorbol-ester/DAG-type zinc finger occupies 1540 to 1590 (IHELTPFTVGARPVQCCYCTNILTRWSKAVHCKKCRIHVHEGCVNRNITIG). In terms of domain architecture, PH spans 1643–1743 (PPLCTGYLSK…WKECIEQVIR (101 aa)).

Belongs to the protein-tyrosine phosphatase family. Non-receptor class myotubularin subfamily.

Probably acts as an adapter for other myotubularin-like phosphatases. The polypeptide is Myotubularin-related protein 5 (Caenorhabditis elegans).